The chain runs to 455 residues: Kynurenine 3-monooxygenase (455 aa).

Belongs to the aromatic-ring hydroxylase family. KMO subfamily. It depends on FAD as a cofactor.

It carries out the reaction L-kynurenine + NADPH + O2 + H(+) = 3-hydroxy-L-kynurenine + NADP(+) + H2O. It participates in cofactor biosynthesis; NAD(+) biosynthesis; quinolinate from L-kynurenine: step 1/3. In terms of biological role, catalyzes the hydroxylation of L-kynurenine (L-Kyn) to form 3-hydroxy-L-kynurenine (L-3OHKyn). Required for synthesis of quinolinic acid. The polypeptide is Kynurenine 3-monooxygenase (Xanthomonas oryzae pv. oryzae (strain KACC10331 / KXO85)).